The sequence spans 339 residues: Methionine import ATP-binding protein MetN 1 (339 aa).

One can recognise an ABC transporter domain in the interval I2–V241. An ATP-binding site is contributed by G38–S45.

The protein belongs to the ABC transporter superfamily. Methionine importer (TC 3.A.1.24) family. The complex is composed of two ATP-binding proteins (MetN), two transmembrane proteins (MetI) and a solute-binding protein (MetQ).

It is found in the cell membrane. It catalyses the reaction L-methionine(out) + ATP + H2O = L-methionine(in) + ADP + phosphate + H(+). The enzyme catalyses D-methionine(out) + ATP + H2O = D-methionine(in) + ADP + phosphate + H(+). In terms of biological role, part of the ABC transporter complex MetNIQ involved in methionine import. Responsible for energy coupling to the transport system. The sequence is that of Methionine import ATP-binding protein MetN 1 from Bacillus thuringiensis subsp. konkukian (strain 97-27).